Consider the following 631-residue polypeptide: Glutamine--fructose-6-phosphate aminotransferase [isomerizing] (631 aa).

Cysteine 2 acts as the Nucleophile; for GATase activity in catalysis. The Glutamine amidotransferase type-2 domain occupies 2–225; that stretch reads CGIVGYIGTQ…NGEIARLTPL (224 aa). SIS domains follow at residues 298-446 and 480-621; these read LDPQ…QRHS and LAHE…VDQP. Lysine 626 (for Fru-6P isomerization activity) is an active-site residue.

Homodimer.

The protein resides in the cytoplasm. It catalyses the reaction D-fructose 6-phosphate + L-glutamine = D-glucosamine 6-phosphate + L-glutamate. Catalyzes the first step in hexosamine metabolism, converting fructose-6P into glucosamine-6P using glutamine as a nitrogen source. This is Glutamine--fructose-6-phosphate aminotransferase [isomerizing] from Synechocystis sp. (strain ATCC 27184 / PCC 6803 / Kazusa).